A 644-amino-acid polypeptide reads, in one-letter code: Probable potassium transport system protein Kup 2 (644 aa).

The interval 1-21 (MSSDAAAVADRDGSSPGHGGH) is disordered. Transmembrane regions (helical) follow at residues 26–46 (LGAMVVGAVGVVFGDIGTSPL), 69–89 (VLSLIFWSMMLVVTFKYVAII), 120–140 (IILLGVFATALFYGDSMITPA), 155–175 (AGFAPMVLPIAVGILIALFMI), 183–203 (VGMLFGPIMMIYFTTLGVLGT), 231–251 (LAFLAMGSVVLAVTGAEALYA), 265–285 (WLVFVLPALMLNYLGQGAMIL), 312–332 (LVILATMATVIASQAVITGAF), 360–380 (IYIPAINWGLMVMVILLVMSF), 390–410 (YGIAVTGAMAIDTCLIAVVLI), 419–439 (LAAPLIAVFAAVDIAYFGANL), and 444–464 (DGGWFPLLIGFIAFTLLTTWG).

This sequence belongs to the HAK/KUP transporter (TC 2.A.72) family.

Its subcellular location is the cell inner membrane. It catalyses the reaction K(+)(in) + H(+)(in) = K(+)(out) + H(+)(out). In terms of biological role, transport of potassium into the cell. Likely operates as a K(+):H(+) symporter. In Rhizorhabdus wittichii (strain DSM 6014 / CCUG 31198 / JCM 15750 / NBRC 105917 / EY 4224 / RW1) (Sphingomonas wittichii), this protein is Probable potassium transport system protein Kup 2.